The sequence spans 600 residues: MREISVPAPFTVGEHDNVAAMVFEHERDDPDYVIYQRLIDGVWTDVTCAEAANQIRAAALGLISLGVQAGDRVVIFSATRYEWAILDFAILAVGAVTVPIYETSSAEQVRWVLQDSEAVVLFAETDSHATMVAELSGSVPALREVLQIAGSGPNALDRLTEAGASVDPAELTARLAALRSTDPATLIYTSGTTGRPKGCQLTQSNLVHEIKGARAYHPTLLRKGERLLVFLPLAHVLARAISMAAFHSKVTVGFTSDIKNLLPMLAVFKPTVVVSVPRVFEKVYNTAEQNAANAGKGRIFAIAAQTAVDWSEACDRGGPGLLLRAKHAVFDRLVYRKLRAALGGNCRAAVSGGAPLGARLGHFYRGAGLTIYEGYGLSETSGGVAISQFNDLKIGTVGKPVPGNSLRIADDGELLVRGGVVFSGYWRNEQATTEAFTDGWFKTGDLGAVDEDGFLTITGRKKEIIVTAGGKNVAPAVLEDQLRAHPLISQAVVVGDAKPFIGALITIDPEAFEGWKQRNSKTAGASVGDLATDPDLIAEIDAAVKQANLAVSHAESIRKFRILPVDFTEDTGELTPTMKVKRKVVAEKFASDIEAIYNKE.

The protein belongs to the ATP-dependent AMP-binding enzyme family.

It catalyses the reaction a long-chain fatty acid + ATP + CoA = a long-chain fatty acyl-CoA + AMP + diphosphate. It participates in lipid metabolism; fatty acid biosynthesis. Catalyzes the activation of long-chain fatty acids as acyl-coenzyme A (acyl-CoA), which are then transferred to the multifunctional polyketide synthase (PKS) type III for further chain extension. In Mycobacterium bovis (strain ATCC BAA-935 / AF2122/97), this protein is Long-chain-fatty-acid--CoA ligase FadD15 (fadD15).